The primary structure comprises 230 residues: Cytidylate kinase (230 aa).

12–20 (GPSGAGKGT) is a binding site for ATP.

This sequence belongs to the cytidylate kinase family. Type 1 subfamily.

The protein resides in the cytoplasm. It carries out the reaction CMP + ATP = CDP + ADP. The catalysed reaction is dCMP + ATP = dCDP + ADP. The chain is Cytidylate kinase from Shewanella baltica (strain OS223).